The following is a 111-amino-acid chain: Large ribosomal subunit protein eL31 (111 aa).

This sequence belongs to the eukaryotic ribosomal protein eL31 family.

This Tetrahymena thermophila (strain SB210) protein is Large ribosomal subunit protein eL31 (RPL31).